The sequence spans 344 residues: GTP 3',8-cyclase (344 aa).

In terms of domain architecture, Radical SAM core spans 19-245; the sequence is PFGRAVTYLR…DIPYRTGGPA (227 aa). Residue Arg-28 coordinates GTP. Residues Cys-35 and Cys-39 each contribute to the [4Fe-4S] cluster site. Tyr-41 lines the S-adenosyl-L-methionine pocket. Residue Cys-42 coordinates [4Fe-4S] cluster. Arg-77 lines the GTP pocket. Residue Gly-81 coordinates S-adenosyl-L-methionine. Thr-111 is a binding site for GTP. S-adenosyl-L-methionine is bound at residue Ser-135. Lys-171 serves as a coordination point for GTP. Position 205 (Met-205) interacts with S-adenosyl-L-methionine. Residues Cys-268 and Cys-271 each contribute to the [4Fe-4S] cluster site. 273–275 contacts GTP; sequence RVR. Residue Cys-285 participates in [4Fe-4S] cluster binding.

This sequence belongs to the radical SAM superfamily. MoaA family. Monomer and homodimer. The cofactor is [4Fe-4S] cluster.

The catalysed reaction is GTP + AH2 + S-adenosyl-L-methionine = (8S)-3',8-cyclo-7,8-dihydroguanosine 5'-triphosphate + 5'-deoxyadenosine + L-methionine + A + H(+). It functions in the pathway cofactor biosynthesis; molybdopterin biosynthesis. In terms of biological role, catalyzes the cyclization of GTP to (8S)-3',8-cyclo-7,8-dihydroguanosine 5'-triphosphate. The sequence is that of GTP 3',8-cyclase from Brucella abortus (strain S19).